Reading from the N-terminus, the 71-residue chain is Small ribosomal subunit protein bS21 (71 aa).

A compositionally biased stretch (basic residues) spans 48–59 (EKASLAKRHAKR). The segment at 48–71 (EKASLAKRHAKRNFRENARNTRLY) is disordered. Over residues 60-71 (NFRENARNTRLY) the composition is skewed to basic and acidic residues.

This sequence belongs to the bacterial ribosomal protein bS21 family.

In Glaesserella parasuis serovar 5 (strain SH0165) (Haemophilus parasuis), this protein is Small ribosomal subunit protein bS21.